The following is a 131-amino-acid chain: ATP synthase epsilon chain, chloroplastic (131 aa).

This sequence belongs to the ATPase epsilon chain family. As to quaternary structure, F-type ATPases have 2 components, CF(1) - the catalytic core - and CF(0) - the membrane proton channel. CF(1) has five subunits: alpha(3), beta(3), gamma(1), delta(1), epsilon(1). CF(0) has three main subunits: a, b and c.

It localises to the plastid. The protein resides in the chloroplast thylakoid membrane. In terms of biological role, produces ATP from ADP in the presence of a proton gradient across the membrane. In Cyanidioschyzon merolae (strain NIES-3377 / 10D) (Unicellular red alga), this protein is ATP synthase epsilon chain, chloroplastic.